Here is a 69-residue protein sequence, read N- to C-terminus: DNA gyrase inhibitor YacG (69 aa).

Zn(2+) is bound by residues cysteine 13, cysteine 16, cysteine 32, and cysteine 36.

It belongs to the DNA gyrase inhibitor YacG family. As to quaternary structure, interacts with GyrB. It depends on Zn(2+) as a cofactor.

In terms of biological role, inhibits all the catalytic activities of DNA gyrase by preventing its interaction with DNA. Acts by binding directly to the C-terminal domain of GyrB, which probably disrupts DNA binding by the gyrase. The polypeptide is DNA gyrase inhibitor YacG (Neisseria meningitidis serogroup A / serotype 4A (strain DSM 15465 / Z2491)).